Here is a 625-residue protein sequence, read N- to C-terminus: tRNA (uracil-5-)-methyltransferase homolog A (625 aa).

2 disordered regions span residues 1 to 37 and 145 to 165; these read MSENLDNEGPKPMESCGQESSSALSCPTVSVPPAAPA and RPKADPMARRRRQEGESEPPV. Positions 27–37 are enriched in low complexity; it reads PTVSVPPAAPA. In terms of domain architecture, RRM spans 73 to 146; the sequence is FKLELQNVPR…RPLSVRLARP (74 aa). Positions 180 to 209 form a coiled coil; sequence YAEQLERKQLECEQVLQKLAKEIGSTNRAL. Position 378 is a phosphoserine (S378). The S-adenosyl-L-methionine site is built by Q411, E461, and D510. The active-site Nucleophile is C538. The Proton acceptor role is filled by E581. Residues 594–625 are disordered; the sequence is GTGVLGPHSPPAQPTPGPPDNTLQETGTFPSS. The segment covering 601 to 612 has biased composition (pro residues); sequence HSPPAQPTPGPP. At S602 the chain carries Phosphoserine. A compositionally biased stretch (polar residues) spans 614-625; sequence NTLQETGTFPSS.

The protein belongs to the class I-like SAM-binding methyltransferase superfamily. RNA M5U methyltransferase family.

The protein resides in the cytoplasm. It localises to the cytosol. The catalysed reaction is uridine(54) in tRNA + S-adenosyl-L-methionine = 5-methyluridine(54) in tRNA + S-adenosyl-L-homocysteine + H(+). It catalyses the reaction a uridine in mRNA + S-adenosyl-L-methionine = a 5-methyluridine in mRNA + S-adenosyl-L-homocysteine + H(+). In terms of biological role, S-adenosyl-L-methionine-dependent methyltransferase that catalyzes the formation of 5-methyl-uridine in tRNAs and some mRNAs. Mainly catalyzes the methylation of uridine at position 54 (m5U54) in cytosolic tRNAs. Also able to mediate the formation of 5-methyl-uridine in some mRNAs. The sequence is that of tRNA (uracil-5-)-methyltransferase homolog A from Homo sapiens (Human).